Consider the following 239-residue polypeptide: Large ribosomal subunit protein uL30 (239 aa).

The disordered stretch occupies residues 1–37; sequence MSKFVPENVQKKLARDEKLRKAKAEQRKASSAQMKQR. Over residues 9–28 the composition is skewed to basic and acidic residues; it reads VQKKLARDEKLRKAKAEQRK.

Belongs to the universal ribosomal protein uL30 family.

The protein is Large ribosomal subunit protein uL30 (RPL7) of Tetrahymena thermophila.